Reading from the N-terminus, the 79-residue chain is Acyl carrier protein (79 aa).

One can recognise a Carrier domain in the interval 2–77; sequence SEIGERVKKI…DATKFLEKNA (76 aa). Ser-37 is subject to O-(pantetheine 4'-phosphoryl)serine.

The protein belongs to the acyl carrier protein (ACP) family. In terms of processing, 4'-phosphopantetheine is transferred from CoA to a specific serine of apo-ACP by AcpS. This modification is essential for activity because fatty acids are bound in thioester linkage to the sulfhydryl of the prosthetic group.

The protein resides in the cytoplasm. It functions in the pathway lipid metabolism; fatty acid biosynthesis. Functionally, carrier of the growing fatty acid chain in fatty acid biosynthesis. This is Acyl carrier protein from Nitrobacter winogradskyi (strain ATCC 25391 / DSM 10237 / CIP 104748 / NCIMB 11846 / Nb-255).